The sequence spans 244 residues: 1-(5-phosphoribosyl)-5-[(5-phosphoribosylamino)methylideneamino] imidazole-4-carboxamide isomerase (244 aa).

Asp8 acts as the Proton acceptor in catalysis. The active-site Proton donor is Asp129.

This sequence belongs to the HisA/HisF family.

It localises to the cytoplasm. It catalyses the reaction 1-(5-phospho-beta-D-ribosyl)-5-[(5-phospho-beta-D-ribosylamino)methylideneamino]imidazole-4-carboxamide = 5-[(5-phospho-1-deoxy-D-ribulos-1-ylimino)methylamino]-1-(5-phospho-beta-D-ribosyl)imidazole-4-carboxamide. Its pathway is amino-acid biosynthesis; L-histidine biosynthesis; L-histidine from 5-phospho-alpha-D-ribose 1-diphosphate: step 4/9. The chain is 1-(5-phosphoribosyl)-5-[(5-phosphoribosylamino)methylideneamino] imidazole-4-carboxamide isomerase from Chelativorans sp. (strain BNC1).